Here is an 869-residue protein sequence, read N- to C-terminus: Valine--tRNA ligase (869 aa).

The short motif at 47–57 (PYPTGNFHIGN) is the 'HIGH' region element. Positions 521–525 (KMSKS) match the 'KMSKS' region motif. ATP is bound at residue Lys524.

It belongs to the class-I aminoacyl-tRNA synthetase family. ValS type 2 subfamily.

The protein resides in the cytoplasm. The catalysed reaction is tRNA(Val) + L-valine + ATP = L-valyl-tRNA(Val) + AMP + diphosphate. In terms of biological role, catalyzes the attachment of valine to tRNA(Val). As ValRS can inadvertently accommodate and process structurally similar amino acids such as threonine, to avoid such errors, it has a 'posttransfer' editing activity that hydrolyzes mischarged Thr-tRNA(Val) in a tRNA-dependent manner. This chain is Valine--tRNA ligase, found in Methanosarcina barkeri (strain Fusaro / DSM 804).